We begin with the raw amino-acid sequence, 151 residues long: 3-hydroxyacyl-[acyl-carrier-protein] dehydratase FabZ (151 aa).

Histidine 53 is a catalytic residue.

The protein belongs to the thioester dehydratase family. FabZ subfamily.

It localises to the cytoplasm. It catalyses the reaction a (3R)-hydroxyacyl-[ACP] = a (2E)-enoyl-[ACP] + H2O. Involved in unsaturated fatty acids biosynthesis. Catalyzes the dehydration of short chain beta-hydroxyacyl-ACPs and long chain saturated and unsaturated beta-hydroxyacyl-ACPs. This Erythrobacter litoralis (strain HTCC2594) protein is 3-hydroxyacyl-[acyl-carrier-protein] dehydratase FabZ.